We begin with the raw amino-acid sequence, 145 residues long: Large ribosomal subunit protein uL24 (145 aa).

2 disordered regions span residues 1–21 (MKFN…HFNA) and 122–145 (KAKS…KMQE). A Glycyl lysine isopeptide (Lys-Gly) (interchain with G-Cter in SUMO2) cross-link involves residue K136. Residue T139 is modified to Phosphothreonine.

This sequence belongs to the universal ribosomal protein uL24 family. In terms of assembly, component of the large ribosomal subunit. Interacts with DHX33. Ufmylated by UFL1 in response to endoplasmic reticulum stress, promoting reticulophagy of endoplasmic reticulum sheets.

It is found in the cytoplasm. Functionally, component of the large ribosomal subunit. The ribosome is a large ribonucleoprotein complex responsible for the synthesis of proteins in the cell. The chain is Large ribosomal subunit protein uL24 (Rpl26) from Rattus norvegicus (Rat).